The chain runs to 674 residues: Inactivation-no-after-potential D protein (674 aa).

The region spanning 17-106 (MVTLDKTGKK…KIELEIQTFD (90 aa)) is the PDZ 1 domain. The tract at residues 133–192 (QTTNNNASGGQGMGQGQGQGQGMAGMNRQQSMQKRNTTFTASMRQKHSNYADEDDEDTRD) is disordered. Positions 141–155 (GGQGMGQGQGQGQGM) are enriched in gly residues. A compositionally biased stretch (polar residues) spans 159–175 (NRQQSMQKRNTTFTASM). PDZ domains are found at residues 249–332 (RIEV…TSRR) and 364–448 (ARTV…LTLK). Residues 458–475 (AAEEKKKEEAKKEEEKPQ) show a composition bias toward basic and acidic residues. The disordered stretch occupies residues 458–481 (AAEEKKKEEAKKEEEKPQEPATAE). 2 consecutive PDZ domains span residues 489–577 (LIEL…RADP) and 584–664 (NVDL…TRPK). S598 and S600 each carry phosphoserine.

Interacts with the C-terminus of trp, and with norpA and inaC to form the inaD signaling complex. Interacts with Fkbp59, which together with trpl, rhodopsin and calmodulin may also be part of the inaD complex. Post-translationally, phosphorylated by inaC. Expressed in photoreceptor cells (R cells) of the compound eyes and ocelli.

Its subcellular location is the cell projection. The protein resides in the rhabdomere. In terms of biological role, involved in the negative feedback regulation of the light-activated signaling cascade in photoreceptors through a calcium-mediated process. Interacts with tetrapeptide ligand located in C-terminal sequence of 3 key components of the visual cascade, tethering them and forming a macromolecular signaling phototransduction complex. The polypeptide is Inactivation-no-after-potential D protein (inaD) (Drosophila melanogaster (Fruit fly)).